The chain runs to 619 residues: Phosphomethylpyrimidine synthase (619 aa).

Polar residues predominate over residues 1–11 (MHEQRSLTMNA). The segment at 1 to 25 (MHEQRSLTMNALTPAVSTGPLPASR) is disordered. Substrate is bound by residues N220, M249, Y278, H314, 334–336 (SRG), 375–378 (DGLR), and E414. H418 provides a ligand contact to Zn(2+). Position 441 (Y441) interacts with substrate. H482 serves as a coordination point for Zn(2+). Positions 562, 565, and 570 each coordinate [4Fe-4S] cluster.

It belongs to the ThiC family. Homodimer. The cofactor is [4Fe-4S] cluster.

It catalyses the reaction 5-amino-1-(5-phospho-beta-D-ribosyl)imidazole + S-adenosyl-L-methionine = 4-amino-2-methyl-5-(phosphooxymethyl)pyrimidine + CO + 5'-deoxyadenosine + formate + L-methionine + 3 H(+). It participates in cofactor biosynthesis; thiamine diphosphate biosynthesis. Catalyzes the synthesis of the hydroxymethylpyrimidine phosphate (HMP-P) moiety of thiamine from aminoimidazole ribotide (AIR) in a radical S-adenosyl-L-methionine (SAM)-dependent reaction. The polypeptide is Phosphomethylpyrimidine synthase (Mesorhizobium japonicum (strain LMG 29417 / CECT 9101 / MAFF 303099) (Mesorhizobium loti (strain MAFF 303099))).